A 205-amino-acid polypeptide reads, in one-letter code: Large ribosomal subunit protein eL15 (205 aa).

Disordered stretches follow at residues 70 to 90 (GRKR…HGVN) and 172 to 197 (RGLR…KRRN).

It belongs to the eukaryotic ribosomal protein eL15 family.

In Dictyostelium discoideum (Social amoeba), this protein is Large ribosomal subunit protein eL15 (rpl15-1).